We begin with the raw amino-acid sequence, 207 residues long: Guanylate kinase (207 aa).

The Guanylate kinase-like domain maps to 4–184 (GTLYIVSAPS…ALTDLKTIIR (181 aa)). 11 to 18 (APSGAGKS) serves as a coordination point for ATP.

It belongs to the guanylate kinase family.

It localises to the cytoplasm. It catalyses the reaction GMP + ATP = GDP + ADP. Its function is as follows. Essential for recycling GMP and indirectly, cGMP. In Escherichia coli O6:K15:H31 (strain 536 / UPEC), this protein is Guanylate kinase.